The primary structure comprises 147 residues: Large ribosomal subunit protein bL9 (147 aa).

It belongs to the bacterial ribosomal protein bL9 family.

Its function is as follows. Binds to the 23S rRNA. In Caldanaerobacter subterraneus subsp. tengcongensis (strain DSM 15242 / JCM 11007 / NBRC 100824 / MB4) (Thermoanaerobacter tengcongensis), this protein is Large ribosomal subunit protein bL9.